The chain runs to 646 residues: Threonine--tRNA ligase (646 aa).

The TGS domain occupies 1-63; the sequence is MAQISLTFPD…ETDAKIAIHT (63 aa). The segment at 247–544 is catalytic; that stretch reads DHRKLGREME…LIENYAGKLP (298 aa). Residues Cys344, His395, and His521 each contribute to the Zn(2+) site.

Belongs to the class-II aminoacyl-tRNA synthetase family. Homodimer. Zn(2+) serves as cofactor.

The protein resides in the cytoplasm. It carries out the reaction tRNA(Thr) + L-threonine + ATP = L-threonyl-tRNA(Thr) + AMP + diphosphate + H(+). Catalyzes the attachment of threonine to tRNA(Thr) in a two-step reaction: L-threonine is first activated by ATP to form Thr-AMP and then transferred to the acceptor end of tRNA(Thr). Also edits incorrectly charged L-seryl-tRNA(Thr). This chain is Threonine--tRNA ligase, found in Cereibacter sphaeroides (strain ATCC 17023 / DSM 158 / JCM 6121 / CCUG 31486 / LMG 2827 / NBRC 12203 / NCIMB 8253 / ATH 2.4.1.) (Rhodobacter sphaeroides).